A 507-amino-acid chain; its full sequence is ATP synthase subunit alpha, chloroplastic (507 aa).

170 to 177 (GDRQTGKT) serves as a coordination point for ATP.

Belongs to the ATPase alpha/beta chains family. As to quaternary structure, F-type ATPases have 2 components, CF(1) - the catalytic core - and CF(0) - the membrane proton channel. CF(1) has five subunits: alpha(3), beta(3), gamma(1), delta(1), epsilon(1). CF(0) has four main subunits: a, b, b' and c.

The protein localises to the plastid. The protein resides in the chloroplast thylakoid membrane. It catalyses the reaction ATP + H2O + 4 H(+)(in) = ADP + phosphate + 5 H(+)(out). Its function is as follows. Produces ATP from ADP in the presence of a proton gradient across the membrane. The alpha chain is a regulatory subunit. The polypeptide is ATP synthase subunit alpha, chloroplastic (Piper cenocladum (Ant piper)).